A 716-amino-acid polypeptide reads, in one-letter code: MDQLSYQSRLIPPEEAQQTGCFTSLPIRIHPRNDIADAATAKFIADWAKHVGDGREKRTHFCPSRVGNWNSLLYPEGLPERLGSVSYLLDLGLIHDDVNEELSVQDAMAAHERLRPALDPQDNRKWDPESPQMKFKMLLSECVIECIKTDRELGTAMLKSFRVLWLDIAENATSDAPQTMDDYWDVRMTNGGMSVFWPMVLYATNLRLSEEQHTLVQPIIAAAEEALCWANDYFSYEREVWELETGKAKRIVNIVEMVSRTKGLSSAEAKAEVKRMILGAEAKYCRLRDDLLSSNPEMSMDLKRWIEYIGLSISGNHYWLSACSRQNTWKTNCSIDGKINGLTNGSVNDTNNRSVDGVVNGTVDTGIEEPSTGNKDTSLKALKLLFNSTPNESHPVCRYPNDKLSDYAMVAPMTHISSLPSKGTRSELISALNVWLKVPPVVLGHISSAIDMLHNASLILDDIQDNSPLRRGVPAAHVVFGTAQSINSATFMFVKATEAVRSTLSPAALEALLRGLQTLFMGQSWDLYWKHNLQCPAEGDYIRMVDHKTGGMFVMLVQLMAAESPYYGASVIEDLERLMRLLGRFYQIRDDYMNFSAYSAQKGFAEDLDEGKFSFPVVCGFERDPELRGQILAIFRQRPTSGAGEATQLSRKVKEHLIRCIAASGGFDETLKCLRSLENELDTEIAELEKKLGQVNPLLRLCLATLSMEGCEKICW.

The tract at residues 4 to 328 (LSYQSRLIPP…WLSACSRQNT (325 aa)) is sesterterpenoid synthase. D96 provides a ligand contact to Mg(2+). D96 serves as a coordination point for substrate. Residues 187–190 (RMTN) form a substrate region. N231 contacts substrate. Residues 235–239 (SYERE) are substrate. The geranylfarnesyl diphosphate synthase stretch occupies residues 329-711 (WKTNCSIDGK…CLATLSMEGC (383 aa)). The isopentenyl diphosphate site is built by K422, R425, and H454. Mg(2+)-binding residues include D461 and D465. A dimethylallyl diphosphate-binding site is contributed by R470. Isopentenyl diphosphate is bound at residue R471. Dimethylallyl diphosphate-binding residues include K548, T549, Q587, N594, and K602.

It in the N-terminal section; belongs to the terpene synthase family. The protein in the C-terminal section; belongs to the FPP/GGPP synthase family.

The catalysed reaction is 4 isopentenyl diphosphate + dimethylallyl diphosphate = (2E,6E,10E,14E)-geranylfarnesyl diphosphate + 4 diphosphate. It carries out the reaction (2E,6E,10E,14E)-geranylfarnesyl diphosphate = fusoxypene A + diphosphate. It catalyses the reaction (2E,6E,10E,14E)-geranylfarnesyl diphosphate = fusoxypene B + diphosphate. The enzyme catalyses (2E,6E,10E,14E)-geranylfarnesyl diphosphate = fusoxypene C + diphosphate. The catalysed reaction is (2E,6E,10E,14E)-geranylfarnesyl diphosphate = (-)-astellatene + diphosphate. Its function is as follows. Bifunctional sesterterpenoid synthase that performs both prenyl transferase and terpene cyclase activity, converting isopentenyl diphosphate and dimethylallyl diphosphate into geranylfarnesyl diphosphate (GFPP) and then converting GFPP into the enantiomeric sesterterpenes with a 5-6-7-3-5 ring system fusoxypene A, fusoxypene B, fusoxypene C and (-)-astellatene. In Fusarium oxysporum (Fusarium vascular wilt), this protein is Fusoxypene synthase.